Reading from the N-terminus, the 425-residue chain is Serine--tRNA ligase (425 aa).

231–233 lines the L-serine pocket; that stretch reads TAE. 262–264 lines the ATP pocket; sequence RSE. Glutamate 285 is an L-serine binding site. 349–352 is an ATP binding site; the sequence is EISS. An L-serine-binding site is contributed by serine 385.

This sequence belongs to the class-II aminoacyl-tRNA synthetase family. Type-1 seryl-tRNA synthetase subfamily. Homodimer. The tRNA molecule binds across the dimer.

It is found in the cytoplasm. The catalysed reaction is tRNA(Ser) + L-serine + ATP = L-seryl-tRNA(Ser) + AMP + diphosphate + H(+). It catalyses the reaction tRNA(Sec) + L-serine + ATP = L-seryl-tRNA(Sec) + AMP + diphosphate + H(+). The protein operates within aminoacyl-tRNA biosynthesis; selenocysteinyl-tRNA(Sec) biosynthesis; L-seryl-tRNA(Sec) from L-serine and tRNA(Sec): step 1/1. Its function is as follows. Catalyzes the attachment of serine to tRNA(Ser). Is also able to aminoacylate tRNA(Sec) with serine, to form the misacylated tRNA L-seryl-tRNA(Sec), which will be further converted into selenocysteinyl-tRNA(Sec). In Bacillus licheniformis (strain ATCC 14580 / DSM 13 / JCM 2505 / CCUG 7422 / NBRC 12200 / NCIMB 9375 / NCTC 10341 / NRRL NRS-1264 / Gibson 46), this protein is Serine--tRNA ligase.